A 224-amino-acid polypeptide reads, in one-letter code: uncharacterized protein (224 aa).

This is an uncharacterized protein from Bacillus anthracis.